Consider the following 333-residue polypeptide: Ornithine carbamoyltransferase (333 aa).

Residues Ser-56–Thr-59, Arg-107, and His-134–Gln-137 each bind carbamoyl phosphate. Residues Asn-167, Asp-231, and Ser-235 to Met-236 each bind L-ornithine. Carbamoyl phosphate contacts are provided by residues Cys-273 to Leu-274 and Arg-318.

Belongs to the aspartate/ornithine carbamoyltransferase superfamily. OTCase family.

It is found in the cytoplasm. It catalyses the reaction carbamoyl phosphate + L-ornithine = L-citrulline + phosphate + H(+). Its pathway is amino-acid degradation; L-arginine degradation via ADI pathway; carbamoyl phosphate from L-arginine: step 2/2. Functionally, reversibly catalyzes the transfer of the carbamoyl group from carbamoyl phosphate (CP) to the N(epsilon) atom of ornithine (ORN) to produce L-citrulline. This is Ornithine carbamoyltransferase from Clostridium botulinum (strain ATCC 19397 / Type A).